Consider the following 854-residue polypeptide: Envelope glycoprotein gp160 (854 aa).

An N-terminal signal peptide occupies residues 1 to 31 (MKVMEKKKRDWNSLSIITIITIILLTPCLTS). Over 32–675 (ELWVTVYYGV…ITKWLWYIKI (644 aa)) the chain is Extracellular. 6 cysteine pairs are disulfide-bonded: C53–C73, C118–C203, C125–C194, C130–C155, C216–C245, and C226–C237. Residues 130–154 (CSKANFSQAKNLTNQTSSPPLEMKN) are V1. N-linked (GlcNAc...) asparagine; by host glycans are attached at residues N134, N140, N143, N154, N158, N186, and N195. Residues 155–194 (CSFNVTTELRDKKKQVYSLFYVEDVVNLGNENNTYRIINC) are V2. Residues N239, N260, N267, N274, N299, N331, N336, N351, and N356 are each glycosylated (N-linked (GlcNAc...) asparagine; by host). The segment at 294-327 (CHRPGNNTRGEVQIGPGMTFYNIENVVGDTRSAY) is V3. C294 and C328 are disulfide-bonded. Positions 362 to 372 (ASGGDPEVTHH) are CD4-binding loop. 2 cysteine pairs are disulfide-bonded: C376–C429 and C383–C402. The tract at residues 383–402 (CNTSQIFTDNITNGIIILPC) is V4. N-linked (GlcNAc...) asparagine; by host glycosylation is found at N384, N392, N426, N432, N446, and N450. V5 stretches follow at residues 445–456 (TNNSGNLTFRPT) and 447–456 (NSGNLTFRPT). The tract at residues 501–522 (AAFGLGALFLGFLGAAGSTMGA) is fusion peptide. An immunosuppression region spans residues 564–582 (KQLQARLLAVERYLQDQQI). C588 and C594 form a disulfide bridge. N-linked (GlcNAc...) asparagine; by host glycans are attached at residues N601, N608, N616, and N628. A coiled-coil region spans residues 624–658 (KLVSNYTGKIFGLLEEAQSQQEKNERDLLELDQWA). The interval 653–674 (ELDQWASLWNWFDITKWLWYIK) is MPER; binding to GalCer. A helical transmembrane segment spans residues 676–696 (FLMAVGGIIGLRIIMTVFSVV). The Cytoplasmic portion of the chain corresponds to 697–854 (RRVRQGYSPL…IRQGLERALL (158 aa)). Residues 703-706 (YSPL) carry the YXXL motif; contains endocytosis signal motif. Positions 853-854 (LL) match the Di-leucine internalization motif motif.

This sequence belongs to the HIV-1 env protein family. In terms of assembly, the mature envelope protein (Env) consists of a homotrimer of non-covalently associated gp120-gp41 heterodimers. The resulting complex protrudes from the virus surface as a spike. There seems to be as few as 10 spikes on the average virion. Interacts with host CD4, CCR5 and CXCR4. Gp120 also interacts with the C-type lectins CD209/DC-SIGN and CLEC4M/DC-SIGNR (collectively referred to as DC-SIGN(R)). Gp120 and gp41 interact with GalCer. Gp120 interacts with host ITGA4/ITGB7 complex; on CD4+ T-cells, this interaction results in rapid activation of integrin ITGAL/LFA-1, which facilitates efficient cell-to-cell spreading of HIV-1. Gp120 interacts with cell-associated heparan sulfate; this interaction increases virus infectivity on permissive cells and may be involved in infection of CD4- cells. As to quaternary structure, the mature envelope protein (Env) consists of a homotrimer of non-covalently associated gp120-gp41 heterodimers. The resulting complex protrudes from the virus surface as a spike. There seems to be as few as 10 spikes on the average virion. Highly glycosylated by host. The high number of glycan on the protein is reffered to as 'glycan shield' because it contributes to hide protein sequence from adaptive immune system. Post-translationally, palmitoylation of the transmembrane protein and of Env polyprotein (prior to its proteolytic cleavage) is essential for their association with host cell membrane lipid rafts. Palmitoylation is therefore required for envelope trafficking to classical lipid rafts, but not for viral replication. In terms of processing, specific enzymatic cleavages in vivo yield mature proteins. Envelope glycoproteins are synthesized as an inactive precursor that is heavily N-glycosylated and processed likely by host cell furin in the Golgi to yield the mature SU and TM proteins. The cleavage site between SU and TM requires the minimal sequence [KR]-X-[KR]-R. About 2 of the 9 disulfide bonds of gp41 are reduced by P4HB/PDI, following binding to CD4 receptor.

It is found in the virion membrane. The protein resides in the host cell membrane. Its subcellular location is the host endosome membrane. Its function is as follows. Attaches the virus to the host lymphoid cell by binding to the primary receptor CD4. This interaction induces a structural rearrangement creating a high affinity binding site for a chemokine coreceptor like CXCR4 and/or CCR5. Acts as a ligand for CD209/DC-SIGN and CLEC4M/DC-SIGNR, which are respectively found on dendritic cells (DCs), and on endothelial cells of liver sinusoids and lymph node sinuses. These interactions allow capture of viral particles at mucosal surfaces by these cells and subsequent transmission to permissive cells. HIV subverts the migration properties of dendritic cells to gain access to CD4+ T-cells in lymph nodes. Virus transmission to permissive T-cells occurs either in trans (without DCs infection, through viral capture and transmission), or in cis (following DCs productive infection, through the usual CD4-gp120 interaction), thereby inducing a robust infection. In trans infection, bound virions remain infectious over days and it is proposed that they are not degraded, but protected in non-lysosomal acidic organelles within the DCs close to the cell membrane thus contributing to the viral infectious potential during DCs' migration from the periphery to the lymphoid tissues. On arrival at lymphoid tissues, intact virions recycle back to DCs' cell surface allowing virus transmission to CD4+ T-cells. Acts as a class I viral fusion protein. Under the current model, the protein has at least 3 conformational states: pre-fusion native state, pre-hairpin intermediate state, and post-fusion hairpin state. During fusion of viral and target intracellular membranes, the coiled coil regions (heptad repeats) assume a trimer-of-hairpins structure, positioning the fusion peptide in close proximity to the C-terminal region of the ectodomain. The formation of this structure appears to drive apposition and subsequent fusion of viral and target cell membranes. Complete fusion occurs in host cell endosomes and is dynamin-dependent, however some lipid transfer might occur at the plasma membrane. The virus undergoes clathrin-dependent internalization long before endosomal fusion, thus minimizing the surface exposure of conserved viral epitopes during fusion and reducing the efficacy of inhibitors targeting these epitopes. Membranes fusion leads to delivery of the nucleocapsid into the cytoplasm. Functionally, oligomerizes in the host endoplasmic reticulum into predominantly trimers. In a second time, gp160 transits in the host Golgi, where glycosylation is completed. The precursor is then proteolytically cleaved in the trans-Golgi and thereby activated by cellular furin or furin-like proteases to produce gp120 and gp41. The chain is Envelope glycoprotein gp160 from Pan (chimpanzees).